A 117-amino-acid chain; its full sequence is Ribosome-binding factor A (117 aa).

The protein belongs to the RbfA family. As to quaternary structure, monomer. Binds 30S ribosomal subunits, but not 50S ribosomal subunits or 70S ribosomes.

The protein resides in the cytoplasm. In terms of biological role, one of several proteins that assist in the late maturation steps of the functional core of the 30S ribosomal subunit. Associates with free 30S ribosomal subunits (but not with 30S subunits that are part of 70S ribosomes or polysomes). Required for efficient processing of 16S rRNA. May interact with the 5'-terminal helix region of 16S rRNA. This Blochmanniella floridana protein is Ribosome-binding factor A.